A 345-amino-acid polypeptide reads, in one-letter code: 4-hydroxy-2-oxovalerate aldolase 1 (345 aa).

Residues Ile-9–Ala-261 form the Pyruvate carboxyltransferase domain. A substrate-binding site is contributed by Arg-17 to Asp-18. Position 18 (Asp-18) interacts with Mn(2+). His-21 (proton acceptor) is an active-site residue. Residues Ser-171 and His-200 each contribute to the substrate site. Mn(2+)-binding residues include His-200 and His-202. Tyr-291 is a binding site for substrate.

It belongs to the 4-hydroxy-2-oxovalerate aldolase family.

The catalysed reaction is (S)-4-hydroxy-2-oxopentanoate = acetaldehyde + pyruvate. The polypeptide is 4-hydroxy-2-oxovalerate aldolase 1 (Nocardia farcinica (strain IFM 10152)).